The following is a 165-amino-acid chain: Large ribosomal subunit protein uL10 (165 aa).

It belongs to the universal ribosomal protein uL10 family. In terms of assembly, part of the ribosomal stalk of the 50S ribosomal subunit. The N-terminus interacts with L11 and the large rRNA to form the base of the stalk. The C-terminus forms an elongated spine to which L12 dimers bind in a sequential fashion forming a multimeric L10(L12)X complex.

In terms of biological role, forms part of the ribosomal stalk, playing a central role in the interaction of the ribosome with GTP-bound translation factors. The polypeptide is Large ribosomal subunit protein uL10 (Deinococcus deserti (strain DSM 17065 / CIP 109153 / LMG 22923 / VCD115)).